A 111-amino-acid chain; its full sequence is Ribonuclease P protein component (111 aa).

Belongs to the RnpA family. Consists of a catalytic RNA component (M1 or rnpB) and a protein subunit.

The enzyme catalyses Endonucleolytic cleavage of RNA, removing 5'-extranucleotides from tRNA precursor.. Functionally, RNaseP catalyzes the removal of the 5'-leader sequence from pre-tRNA to produce the mature 5'-terminus. It can also cleave other RNA substrates such as 4.5S RNA. The protein component plays an auxiliary but essential role in vivo by binding to the 5'-leader sequence and broadening the substrate specificity of the ribozyme. The chain is Ribonuclease P protein component from Clostridium botulinum (strain Loch Maree / Type A3).